Here is a 311-residue protein sequence, read N- to C-terminus: tRNA-cytidine(32) 2-sulfurtransferase (311 aa).

Residues 58–63 (SGGKDS) carry the PP-loop motif motif. Cys-133, Cys-136, and Cys-224 together coordinate [4Fe-4S] cluster.

It belongs to the TtcA family. Homodimer. Requires Mg(2+) as cofactor. It depends on [4Fe-4S] cluster as a cofactor.

The protein localises to the cytoplasm. The catalysed reaction is cytidine(32) in tRNA + S-sulfanyl-L-cysteinyl-[cysteine desulfurase] + AH2 + ATP = 2-thiocytidine(32) in tRNA + L-cysteinyl-[cysteine desulfurase] + A + AMP + diphosphate + H(+). It participates in tRNA modification. Catalyzes the ATP-dependent 2-thiolation of cytidine in position 32 of tRNA, to form 2-thiocytidine (s(2)C32). The sulfur atoms are provided by the cysteine/cysteine desulfurase (IscS) system. This Polaromonas sp. (strain JS666 / ATCC BAA-500) protein is tRNA-cytidine(32) 2-sulfurtransferase.